A 117-amino-acid chain; its full sequence is Large ribosomal subunit protein eL34 (117 aa).

The protein belongs to the eukaryotic ribosomal protein eL34 family. In terms of assembly, component of the large ribosomal subunit.

Its subcellular location is the cytoplasm. The protein localises to the cytosol. The protein resides in the endoplasmic reticulum. In terms of biological role, component of the large ribosomal subunit. The ribosome is a large ribonucleoprotein complex responsible for the synthesis of proteins in the cell. The protein is Large ribosomal subunit protein eL34 (rpl34) of Ictalurus punctatus (Channel catfish).